Consider the following 292-residue polypeptide: Probable alpha-L-glutamate ligase (292 aa).

The ATP-grasp domain maps to 104 to 287 (HQLLAAKGID…VATRIIEHVE (184 aa)). ATP-binding positions include lysine 141, 178–179 (EF), aspartate 187, and 211–213 (RSN). 3 residues coordinate Mg(2+): aspartate 248, glutamate 260, and asparagine 262. 3 residues coordinate Mn(2+): aspartate 248, glutamate 260, and asparagine 262.

The protein belongs to the RimK family. Mg(2+) is required as a cofactor. It depends on Mn(2+) as a cofactor.

The chain is Probable alpha-L-glutamate ligase from Stenotrophomonas maltophilia (strain R551-3).